We begin with the raw amino-acid sequence, 725 residues long: N-alpha-acetyltransferase 35, NatC auxiliary subunit (725 aa).

A disordered region spans residues 548–573 (ERIMEEQQKGRSSKKTKKKKKVRPLS). The span at 558–571 (RSSKKTKKKKKVRP) shows a compositional bias: basic residues.

Belongs to the MAK10 family. In terms of assembly, component of the N-terminal acetyltransferase C (NatC) complex, which is composed of NAA35, NAA38 and NAA30. In terms of tissue distribution, expressed in primary spermatocytes, basal epidermis, interstitial fibroblasts of skeletal muscle, and intestinal crypts.

The protein localises to the cytoplasm. Functionally, auxillary component of the N-terminal acetyltransferase C (NatC) complex which catalyzes acetylation of N-terminal methionine residues. N-terminal acetylation protects proteins from ubiquitination and degradation by the N-end rule pathway. Involved in regulation of apoptosis and proliferation of smooth muscle cells. The sequence is that of N-alpha-acetyltransferase 35, NatC auxiliary subunit (Naa35) from Rattus norvegicus (Rat).